A 528-amino-acid polypeptide reads, in one-letter code: MSTVNVQIGLHELLNGSNAQIQLSVPQLVEKVLMRNEGKLTSTGAVSASTGKYTGRSPKDKFIVKEASVADKIAWGAVNQPISEEHFNKLYTKVLEYLKEKEELFVFKGFAGADRNYRLPIQVINEYAWHNLFVHQLFIRPTEEELTTHESEFTIVSAPNFKADPAVDGTNSEAFIMVSFEKRIVLIGGTEYAGEMKKSIFSIMNFLLPEQDILSMHCSANVGEEGDVALFFGLSGTGKTTLSADPNRKLIGDDEHGWSDNGVFNIEGGCYAKCVNLSHEKEPQIFDAITFGSVLENVIINDQTRIADYNDTTLTENTRAAYPMHAIDNIILPSVAGHPNTIIFLTADASGVLPPISKLSKEQAMYHFLSGYTSKLAGTERGVTSPQATFSTCFGSPFLPLDASRYAEMLGEKIEKHDAKVFLVNTGWTGGEYGVGKRMNLGYTRAMIQAALNGELAKTETAKHDIFGLEVPLHVPGVPDEVLMPEQTWADKAAYKAKAIELANEFKANFKKFDSVSEDIINLGGPIA.

Residues Arg-56, Tyr-192, and Lys-198 each contribute to the substrate site. Residues Lys-198, His-217, and 233–241 contribute to the ATP site; that span reads GLSGTGKTT. Lys-198 and His-217 together coordinate Mn(2+). Asp-254 contributes to the Mn(2+) binding site. Residues Glu-282, Arg-319, and Thr-444 each contribute to the ATP site. A substrate-binding site is contributed by Arg-319.

The protein belongs to the phosphoenolpyruvate carboxykinase (ATP) family. The cofactor is Mn(2+).

The protein localises to the cytoplasm. The enzyme catalyses oxaloacetate + ATP = phosphoenolpyruvate + ADP + CO2. The protein operates within carbohydrate biosynthesis; gluconeogenesis. Its function is as follows. Involved in the gluconeogenesis. Catalyzes the conversion of oxaloacetate (OAA) to phosphoenolpyruvate (PEP) through direct phosphoryl transfer between the nucleoside triphosphate and OAA. This is Phosphoenolpyruvate carboxykinase (ATP) from Bacillus anthracis (strain A0248).